The sequence spans 247 residues: ATP synthase subunit a, chloroplastic (247 aa).

The next 5 helical transmembrane spans lie at 38 to 58 (QVLITSWVVIAILLGSAAIAV), 95 to 115 (VPFIGTMFLFIFVSNWSGALL), 134 to 154 (INTTVALALPTSVAYFYAGLT), 199 to 219 (LVVVVLVSLVPSVVPIPVMFL), and 220 to 240 (GLFTSSIQALIFATLAAAYIG).

The protein belongs to the ATPase A chain family. F-type ATPases have 2 components, CF(1) - the catalytic core - and CF(0) - the membrane proton channel. CF(1) has five subunits: alpha(3), beta(3), gamma(1), delta(1), epsilon(1). CF(0) has four main subunits: a, b, b' and c.

It localises to the plastid. It is found in the chloroplast thylakoid membrane. In terms of biological role, key component of the proton channel; it plays a direct role in the translocation of protons across the membrane. This chain is ATP synthase subunit a, chloroplastic, found in Illicium oligandrum (Star anise).